Consider the following 653-residue polypeptide: Testicular spindle-associated protein SHCBP1L (653 aa).

Residues 1–65 are disordered; that stretch reads MASGSKASVP…PVKGKAGRET (65 aa). Serine 8 is modified (phosphoserine). Polar residues predominate over residues 28 to 41; sequence SAVSGDTAAATTLK. A compositionally biased stretch (low complexity) spans 46–56; sequence PVRSVVASPRP. Serine 53 bears the Phosphoserine mark. Residues 299–326 are a coiled coil; the sequence is IAQRFKKTLEKYKNKRVELIEYQSNIKE. PbH1 repeat units follow at residues 493-514, 515-537, 538-571, and 574-596; these read SGHM…CVLT, GAAL…ELYP, GSIA…NMKV, and APKL…SILQ. An N6-acetyllysine modification is found at lysine 570. Lysine 645 is modified (N6-acetyllysine).

In terms of assembly, interacts with HSPA2; this interaction may promote the recruitment of HSPA2 to the spindle. In terms of tissue distribution, expressed in spermatocytes and elongating spermatids inside the seminiferous tubules (at protein level). Testis-specific.

The protein resides in the cytoplasm. It localises to the cytoskeleton. The protein localises to the spindle. Testis-specific spindle-associated factor that plays a role in spermatogenesis. In association with HSPA2, participates in the maintenance of spindle integrity during meiosis in male germ cells. The sequence is that of Testicular spindle-associated protein SHCBP1L from Homo sapiens (Human).